The following is a 228-amino-acid chain: Rab-like protein 2B (228 aa).

GTP contacts are provided by residues 28–35, 76–80, and 133–136; these read GDSAVGKS, DTAGQ, and NKID. Positions 200–228 are disordered; sequence LEQEEEDVPDQEQSSSIETPSEEAASPHS.

This sequence belongs to the small GTPase superfamily. Rab family. Interacts (in its GTP-bound form) with CEP19 (via residues 121-150); this interaction is required for its localization to the mother centriole and cilium basal body. Interacts (in its GTP-bound form) with the intraflagellar transport (IFT) complex B (via the IFT74-IFT81 heterodimer). Binding to CEP19 and the IFT74-IFT81 heterodimer is mutually exclusive. As to expression, expressed in the testis.

The protein localises to the cytoplasm. Its subcellular location is the cytoskeleton. It is found in the microtubule organizing center. It localises to the centrosome. The protein resides in the centriole. The protein localises to the cilium basal body. In terms of biological role, small GTPase required for ciliation. Activated in a guanine nucleotide exchange factor (GEF)-independent manner via its intrinsic GDP for GTP nucleotide exchange ability. Involved in ciliary assembly by binding the intraflagellar transport (IFT) complex B from the large pool pre-docked at the base of the cilium and thus triggers its entry into the cilia. The protein is Rab-like protein 2B (RABL2B) of Homo sapiens (Human).